Reading from the N-terminus, the 280-residue chain is Urease accessory protein UreD (280 aa).

The protein belongs to the UreD family. In terms of assembly, ureD, UreF and UreG form a complex that acts as a GTP-hydrolysis-dependent molecular chaperone, activating the urease apoprotein by helping to assemble the nickel containing metallocenter of UreC. The UreE protein probably delivers the nickel.

The protein localises to the cytoplasm. Its function is as follows. Required for maturation of urease via the functional incorporation of the urease nickel metallocenter. The sequence is that of Urease accessory protein UreD from Vibrio parahaemolyticus.